The following is a 500-amino-acid chain: 5-taurinomethyluridine-[tRNA] synthase subunit GTPB3, mitochondrial (500 aa).

Residues 1–73 constitute a mitochondrion transit peptide; the sequence is MHFISCCLRR…RRLTRSLPAP (73 aa). R53, E111, and K151 together coordinate 5,10-methylenetetrahydrofolate. Residues 248 to 422 form the TrmE-type G domain; sequence GVHVVIAGST…LLTLLHNTLK (175 aa). GTP contacts are provided by residues 255 to 262, 281 to 285, 302 to 305, and 373 to 376; these read GSTNAGKS, GTTRD, DTAG, and NESD. Residue N258 participates in K(+) binding. Residues S262 and T283 each contribute to the Mg(2+) site. A 5,10-methylenetetrahydrofolate-binding site is contributed by K500.

The protein belongs to the TRAFAC class TrmE-Era-EngA-EngB-Septin-like GTPase superfamily. TrmE GTPase family. The cofactor is K(+).

It is found in the mitochondrion. It catalyses the reaction GTP + H2O = GDP + phosphate + H(+). Functionally, GTPase component of the GTPBP3-MTO1 complex that catalyzes the 5-taurinomethyluridine (taum(5)U) modification at the 34th wobble position (U34) of mitochondrial tRNAs (mt-tRNAs), which plays a role in mt-tRNA decoding and mitochondrial translation. Taum(5)U formation on mammalian mt-tRNA requires the presence of both GTPBP3-mediated GTPase activity and MTO1 catalytic activity. The protein is 5-taurinomethyluridine-[tRNA] synthase subunit GTPB3, mitochondrial (gtpbp3) of Danio rerio (Zebrafish).